Consider the following 95-residue polypeptide: Mitochondrial import inner membrane translocase subunit Tim9 (95 aa).

Residues 35 to 59 (CFTDCIRDFTTRDVKDSEEKCSLNC) carry the Twin CX3C motif motif. 2 cysteine pairs are disulfide-bonded: C35-C59 and C39-C55.

It belongs to the small Tim family. In terms of assembly, heterohexamer; composed of 3 copies of Tim9 and 3 copies of Tim10, named soluble 70 kDa complex. The complex associates with the Tim22 component of the TIM22 complex. Interacts with multi-pass transmembrane proteins in transit.

It localises to the mitochondrion inner membrane. Mitochondrial intermembrane chaperone that participates in the import and insertion of multi-pass transmembrane proteins into the mitochondrial inner membrane. May also be required for the transfer of beta-barrel precursors from the TOM complex to the sorting and assembly machinery (SAM complex) of the outer membrane. Acts as a chaperone-like protein that protects the hydrophobic precursors from aggregation and guide them through the mitochondrial intermembrane space. The chain is Mitochondrial import inner membrane translocase subunit Tim9 (Tim9a) from Drosophila melanogaster (Fruit fly).